The sequence spans 460 residues: Pyruvate dehydrogenase E1 component subunit beta (460 aa).

Positions 2–78 (PVEILMPALS…KVNTPIAVLL (77 aa)) constitute a Lipoyl-binding domain. Lysine 43 carries the post-translational modification N6-lipoyllysine. Residues 91–131 (KTEAPKAETPKPAAAEAPAASAAPVAAQPKADVPSDPAIPA) are disordered. A compositionally biased stretch (low complexity) spans 100-121 (PKPAAAEAPAASAAPVAAQPKA). Residue glutamate 194 coordinates thiamine diphosphate.

In terms of assembly, heterodimer of an alpha and a beta chain. Requires (R)-lipoate as cofactor. The cofactor is thiamine diphosphate.

It catalyses the reaction N(6)-[(R)-lipoyl]-L-lysyl-[protein] + pyruvate + H(+) = N(6)-[(R)-S(8)-acetyldihydrolipoyl]-L-lysyl-[protein] + CO2. Its function is as follows. The pyruvate dehydrogenase complex catalyzes the overall conversion of pyruvate to acetyl-CoA and CO(2). It contains multiple copies of three enzymatic components: pyruvate dehydrogenase (E1), dihydrolipoamide acetyltransferase (E2) and lipoamide dehydrogenase (E3). The polypeptide is Pyruvate dehydrogenase E1 component subunit beta (pdhB) (Rhizobium meliloti (strain 1021) (Ensifer meliloti)).